Consider the following 666-residue polypeptide: Neopullulanase 1 (666 aa).

The N-terminal stretch at 1-29 (MIKLLKPMSLSILLVFILSFSFPFPTAKA) is a signal peptide. Residues alanine 31, aspartate 33, asparagine 35, aspartate 71, aspartate 125, asparagine 174, aspartate 176, asparagine 179, aspartate 180, glycine 216, and aspartate 218 each coordinate Ca(2+). Histidine 296 provides a ligand contact to substrate. 5 residues coordinate Ca(2+): aspartate 305, asparagine 309, phenylalanine 310, serine 312, and glutamate 317. Residue arginine 383 coordinates substrate. Catalysis depends on aspartate 385, which acts as the Nucleophile. Residue glutamate 425 is the Proton donor of the active site. Substrate is bound by residues 500–501 (HD), aspartate 545, and arginine 549.

This sequence belongs to the glycosyl hydrolase 13 family. Ca(2+) serves as cofactor.

Its subcellular location is the secreted. The catalysed reaction is Hydrolysis of pullulan to panose (6-alpha-D-glucosylmaltose).. Functionally, endohydrolysis of 1,4-alpha-glucosidic linkages in pullulan to form panose. Also hydrolyzes cyclodextrins. The sequence is that of Neopullulanase 1 (tvaI) from Thermoactinomyces vulgaris.